The chain runs to 497 residues: Lysine--tRNA ligase (497 aa).

The Mg(2+) site is built by Glu409 and Glu416.

Belongs to the class-II aminoacyl-tRNA synthetase family. In terms of assembly, homodimer. It depends on Mg(2+) as a cofactor.

It is found in the cytoplasm. It carries out the reaction tRNA(Lys) + L-lysine + ATP = L-lysyl-tRNA(Lys) + AMP + diphosphate. The protein is Lysine--tRNA ligase of Streptococcus pyogenes serotype M49 (strain NZ131).